The following is a 159-amino-acid chain: Transcription elongation factor GreA (159 aa).

The stretch at 2 to 77 (EENKEFLLTQ…LENMVRKAVI (76 aa)) forms a coiled coil.

The protein belongs to the GreA/GreB family.

Its function is as follows. Necessary for efficient RNA polymerase transcription elongation past template-encoded arresting sites. The arresting sites in DNA have the property of trapping a certain fraction of elongating RNA polymerases that pass through, resulting in locked ternary complexes. Cleavage of the nascent transcript by cleavage factors such as GreA or GreB allows the resumption of elongation from the new 3'terminus. GreA releases sequences of 2 to 3 nucleotides. The protein is Transcription elongation factor GreA of Clostridioides difficile (strain 630) (Peptoclostridium difficile).